The sequence spans 180 residues: PRA1 family protein F1 (180 aa).

4 consecutive transmembrane segments (helical) span residues 63-83, 84-104, 123-143, and 145-165; these read ANTV…VFLS, LIWN…WLFL, IVLI…DAKL, and IAVA…VRKT.

It belongs to the PRA1 family. In terms of assembly, interacts with PRA1F2. In terms of tissue distribution, expressed in hypocotyls, leaf bases and shoot apex.

The protein localises to the endosome membrane. Functionally, may be involved in both secretory and endocytic intracellular trafficking in the endosomal/prevacuolar compartments. The polypeptide is PRA1 family protein F1 (PRA1F1) (Arabidopsis thaliana (Mouse-ear cress)).